The following is a 394-amino-acid chain: Elongation factor Tu 2 (394 aa).

Residues 10 to 204 (KPHVNVGTIG…ALDNYIPEPE (195 aa)) form the tr-type G domain. The G1 stretch occupies residues 19–26 (GHVDHGKT). 19–26 (GHVDHGKT) lines the GTP pocket. Threonine 26 contributes to the Mg(2+) binding site. The interval 60–64 (GITIS) is G2. A G3 region spans residues 81–84 (DCPG). GTP is bound by residues 81–85 (DCPGH) and 136–139 (NKCD). A G4 region spans residues 136–139 (NKCD). The tract at residues 174–176 (SAL) is G5.

The protein belongs to the TRAFAC class translation factor GTPase superfamily. Classic translation factor GTPase family. EF-Tu/EF-1A subfamily. In terms of assembly, monomer.

The protein resides in the cytoplasm. The enzyme catalyses GTP + H2O = GDP + phosphate + H(+). Functionally, GTP hydrolase that promotes the GTP-dependent binding of aminoacyl-tRNA to the A-site of ribosomes during protein biosynthesis. The chain is Elongation factor Tu 2 from Photobacterium profundum (strain SS9).